Consider the following 434-residue polypeptide: Serine hydroxymethyltransferase (434 aa).

(6S)-5,6,7,8-tetrahydrofolate contacts are provided by residues Leu133 and 137-139 (GHL). N6-(pyridoxal phosphate)lysine is present on Lys242.

It belongs to the SHMT family. As to quaternary structure, homodimer. Pyridoxal 5'-phosphate serves as cofactor.

The protein resides in the cytoplasm. The enzyme catalyses (6R)-5,10-methylene-5,6,7,8-tetrahydrofolate + glycine + H2O = (6S)-5,6,7,8-tetrahydrofolate + L-serine. The protein operates within one-carbon metabolism; tetrahydrofolate interconversion. It participates in amino-acid biosynthesis; glycine biosynthesis; glycine from L-serine: step 1/1. Its function is as follows. Catalyzes the reversible interconversion of serine and glycine with tetrahydrofolate (THF) serving as the one-carbon carrier. This reaction serves as the major source of one-carbon groups required for the biosynthesis of purines, thymidylate, methionine, and other important biomolecules. Also exhibits THF-independent aldolase activity toward beta-hydroxyamino acids, producing glycine and aldehydes, via a retro-aldol mechanism. The polypeptide is Serine hydroxymethyltransferase (Methylorubrum extorquens (strain CM4 / NCIMB 13688) (Methylobacterium extorquens)).